A 101-amino-acid polypeptide reads, in one-letter code: UPF0235 protein Mevan_0378 (101 aa).

This sequence belongs to the UPF0235 family.

In Methanococcus vannielii (strain ATCC 35089 / DSM 1224 / JCM 13029 / OCM 148 / SB), this protein is UPF0235 protein Mevan_0378.